A 185-amino-acid polypeptide reads, in one-letter code: Ribosome-recycling factor (185 aa).

This sequence belongs to the RRF family.

Its subcellular location is the cytoplasm. Responsible for the release of ribosomes from messenger RNA at the termination of protein biosynthesis. May increase the efficiency of translation by recycling ribosomes from one round of translation to another. This Azoarcus sp. (strain BH72) protein is Ribosome-recycling factor.